A 171-amino-acid chain; its full sequence is MAGAELRAALEQRLAALAIRTEVVEHPEVFTVEEMMPHIQHLKGAHSKNLFLKDKKKKGYWLVTVLHDRQINLNDLAKQLGVGSGNLRFADEAAMLEKLKVGQGCATPLALFCDDGDVKFVLDSAFLEGGHEKVYFHPMTNAATMGLSPEDFLTFVKNTGHDPIILNFDKN.

This sequence belongs to the PRORSD1 family.

This is Prolyl-tRNA synthetase associated domain-containing protein 1 (PRORSD1) from Bos taurus (Bovine).